We begin with the raw amino-acid sequence, 318 residues long: Decaprenyl-phosphate phosphoribosyltransferase (318 aa).

Transmembrane regions (helical) follow at residues 33–53 (WIKNLLVLAAPLAAVGSGIEY) and 59–79 (AAKVSVAFVVFCLAASSIYLI). 5-phospho-alpha-D-ribose 1-diphosphate contacts are provided by K35 and Y77. Mg(2+) contacts are provided by N80 and D84. Position 94 (K94) interacts with 5-phospho-alpha-D-ribose 1-diphosphate. Helical transmembrane passes span 99–119 (IAAGVVPEWMAYSLAGLLAVA) and 121–141 (LVISWWLTANLAIVMAVYIAV). K150 and R167 together coordinate 5-phospho-alpha-D-ribose 1-diphosphate. The next 2 membrane-spanning stretches (helical) occupy residues 153–173 (AVLDICIVSSGFLIRAIAGGV) and 177–197 (IPLSQWFLLVMAFGSLFMAAG). K198 serves as a coordination point for trans,octa-cis-decaprenyl phosphate. 3 helical membrane passes run 225 to 245 (LRFVWTLSATAMVVCYGLWAF), 262 to 282 (SWYAVTMIPFTIAILRYAVDI), and 298 to 318 (RVLQILFLAWIGTIGAAIYFS).

It belongs to the UbiA prenyltransferase family. DPPR synthase subfamily. Mg(2+) serves as cofactor.

Its subcellular location is the cell inner membrane. It carries out the reaction trans,octa-cis-decaprenyl phosphate + 5-phospho-alpha-D-ribose 1-diphosphate + H(+) = trans,octa-cis-decaprenylphospho-beta-D-ribofuranose 5-phosphate + diphosphate. Its pathway is cell wall biogenesis; cell wall polysaccharide biosynthesis. Its function is as follows. Involved in the biosynthesis of decaprenylphosphoryl arabinose (DPA) a precursor for arabinan synthesis in mycobacterial cell wall biosynthesis. Catalyzes the transfer of a 5-phosphoribosyl residue from phosphoribose diphosphate (PRPP) to decaprenyl phosphate (DP) to form decaprenylphosphoryl-5-phosphoribose (DPPR). The polypeptide is Decaprenyl-phosphate phosphoribosyltransferase (Mycolicibacterium smegmatis (strain ATCC 700084 / mc(2)155) (Mycobacterium smegmatis)).